The following is a 621-amino-acid chain: tRNA uridine 5-carboxymethylaminomethyl modification enzyme MnmG (621 aa).

Glycine 11–glycine 16 serves as a coordination point for FAD. An NAD(+)-binding site is contributed by glycine 271–phenylalanine 285.

This sequence belongs to the MnmG family. As to quaternary structure, homodimer. Heterotetramer of two MnmE and two MnmG subunits. FAD is required as a cofactor.

The protein resides in the cytoplasm. Functionally, NAD-binding protein involved in the addition of a carboxymethylaminomethyl (cmnm) group at the wobble position (U34) of certain tRNAs, forming tRNA-cmnm(5)s(2)U34. This chain is tRNA uridine 5-carboxymethylaminomethyl modification enzyme MnmG, found in Cytophaga hutchinsonii (strain ATCC 33406 / DSM 1761 / CIP 103989 / NBRC 15051 / NCIMB 9469 / D465).